The sequence spans 519 residues: 6-phosphofructo-2-kinase/fructose-2,6-bisphosphatase 2 (519 aa).

Residues 1–17 (MSENSTFSTEDSCNSSY) show a composition bias toward polar residues. Residues 1–22 (MSENSTFSTEDSCNSSYKPHAS) form a disordered region. Ser-2 bears the N-acetylserine mark. The segment at 2–251 (SENSTFSTED…VYYLMNIHVH (250 aa)) is 6-phosphofructo-2-kinase. Residue Ser-32 is modified to Phosphoserine; by PKA. Residue 48–56 (GLPARGKTY) participates in ATP binding. Beta-D-fructose 6-phosphate-binding residues include Arg-81 and Arg-105. Asp-131 is a catalytic residue. Beta-D-fructose 6-phosphate is bound by residues Thr-133 and Arg-139. Residue Cys-161 is part of the active site. 170-175 (NILEVK) lines the ATP pocket. Positions 175, 196, and 200 each coordinate beta-D-fructose 6-phosphate. The fructose-2,6-bisphosphatase stretch occupies residues 252 to 519 (PRTIYLCRHG…PKTQVSIPVV (268 aa)). Position 259 (Arg-259) interacts with beta-D-fructose 2,6-bisphosphate. Residue His-260 is the Tele-phosphohistidine intermediate of the active site. Asn-266 and Gly-272 together coordinate beta-D-fructose 2,6-bisphosphate. Glu-329 functions as the Proton donor/acceptor in the catalytic mechanism. Residues Tyr-340, Arg-354, Lys-358, Tyr-369, Gln-395, and Arg-399 each coordinate beta-D-fructose 2,6-bisphosphate. 351–354 (FALR) is a binding site for ATP. ATP is bound by residues 395 to 399 (QAVMR) and Tyr-431. The tract at residues 448-493 (HRDKPTHNFPKSQTPVRMRRNSFTPLSSSNTIRRPRNYSVGSRPLK) is disordered. Positions 456 to 479 (FPKSQTPVRMRRNSFTPLSSSNTI) are enriched in polar residues. Ser-469 bears the Phosphoserine mark. Thr-471 carries the phosphothreonine modification. Residue Thr-478 is modified to Phosphothreonine; by PKC. A phosphoserine mark is found at Ser-486 and Ser-496. Residues 500–519 (ALDMQEGADQPKTQVSIPVV) are disordered. Residues 510–519 (PKTQVSIPVV) show a composition bias toward polar residues.

In the C-terminal section; belongs to the phosphoglycerate mutase family. As to quaternary structure, homodimer. Forms a heterodimer with PFKFB3. In terms of processing, phosphorylation by AMPK stimulates activity. Highest levels in kidney; also found in heart, brain, spleen, lung, liver, skeletal muscle and testis.

It carries out the reaction beta-D-fructose 2,6-bisphosphate + H2O = beta-D-fructose 6-phosphate + phosphate. The catalysed reaction is beta-D-fructose 6-phosphate + ATP = beta-D-fructose 2,6-bisphosphate + ADP + H(+). Its activity is regulated as follows. Phosphorylation results in the activation of the kinase activity. Functionally, synthesis and degradation of fructose 2,6-bisphosphate. This chain is 6-phosphofructo-2-kinase/fructose-2,6-bisphosphatase 2 (Pfkfb2), found in Mus musculus (Mouse).